Here is a 95-residue protein sequence, read N- to C-terminus: Small ribosomal subunit protein uS19 (95 aa).

It belongs to the universal ribosomal protein uS19 family.

Its function is as follows. Protein S19 forms a complex with S13 that binds strongly to the 16S ribosomal RNA. This chain is Small ribosomal subunit protein uS19, found in Roseiflexus castenholzii (strain DSM 13941 / HLO8).